The sequence spans 195 residues: MRLNDTEIEQHLKDGIIGVEPAPQANNISGVTLDIHLGNDFRVLQDHAAPFIDISGSREAIEAAIQEVMSDEIVLKDDQAFFIHPGEFALAVTHESITLPADMVGWLDGRSSLARLGLMVHVTAHRIDPGWSGQIVLEFFNSGKLPLALRAGMKIGAISFEKLSGPCARPYNKREDAKYRDQHSAVASRISADGG.

Residues 110 to 115 (RSSLAR), Asp128, 136 to 138 (VLE), Tyr171, Lys178, and Gln182 each bind dCTP. Glu138 serves as the catalytic Proton donor/acceptor.

It belongs to the dCTP deaminase family. In terms of assembly, homotrimer.

The enzyme catalyses dCTP + H2O + H(+) = dUTP + NH4(+). It participates in pyrimidine metabolism; dUMP biosynthesis; dUMP from dCTP (dUTP route): step 1/2. Its function is as follows. Catalyzes the deamination of dCTP to dUTP. This is dCTP deaminase from Idiomarina loihiensis (strain ATCC BAA-735 / DSM 15497 / L2-TR).